Here is a 385-residue protein sequence, read N- to C-terminus: Probable protein phosphatase 2C 79 (385 aa).

A signal peptide spans 1-18; it reads MLSLFFNFLTSCLWPSSS. The PPM-type phosphatase domain occupies 47-356; that stretch reads DFSMAVVQAN…DDITVVVLFL (310 aa). Serine 76 bears the Phosphoserine mark. 4 residues coordinate Mn(2+): aspartate 87, glycine 88, aspartate 288, and aspartate 347.

It belongs to the PP2C family. Mg(2+) is required as a cofactor. Requires Mn(2+) as cofactor.

It carries out the reaction O-phospho-L-seryl-[protein] + H2O = L-seryl-[protein] + phosphate. It catalyses the reaction O-phospho-L-threonyl-[protein] + H2O = L-threonyl-[protein] + phosphate. May dephosphorylate and repress plasma membrane H(+)-ATPases (PM H(+)-ATPases, e.g. AHA1 and AHA2), thus influencing negatively plant growth and fitness. The chain is Probable protein phosphatase 2C 79 from Arabidopsis thaliana (Mouse-ear cress).